The chain runs to 76 residues: Sec-independent protein translocase protein TatA (76 aa).

Residues 1–21 traverse the membrane as a helical segment; that stretch reads MGSFSIWHWLIVLLIVVLVFG. A disordered region spans residues 44 to 76; the sequence is RDGSTAPADPAQQVTANKSADANTVDVEAKQKS. The span at 55–65 shows a compositional bias: polar residues; the sequence is QQVTANKSADA.

This sequence belongs to the TatA/E family. The Tat system comprises two distinct complexes: a TatABC complex, containing multiple copies of TatA, TatB and TatC subunits, and a separate TatA complex, containing only TatA subunits. Substrates initially bind to the TatABC complex, which probably triggers association of the separate TatA complex to form the active translocon.

The protein resides in the cell inner membrane. In terms of biological role, part of the twin-arginine translocation (Tat) system that transports large folded proteins containing a characteristic twin-arginine motif in their signal peptide across membranes. TatA could form the protein-conducting channel of the Tat system. This Methylibium petroleiphilum (strain ATCC BAA-1232 / LMG 22953 / PM1) protein is Sec-independent protein translocase protein TatA.